Here is a 126-residue protein sequence, read N- to C-terminus: Topoisomerase I damage affected protein 8 (126 aa).

In terms of domain architecture, PA14 spans 1–110; it reads MTGYFLPPQT…VTTVSDDFAG (110 aa).

Belongs to the flocculin family.

This Saccharomyces cerevisiae (strain ATCC 204508 / S288c) (Baker's yeast) protein is Topoisomerase I damage affected protein 8 (TDA8).